The following is a 443-amino-acid chain: Tryptophan synthase beta chain (443 aa).

N6-(pyridoxal phosphate)lysine is present on lysine 110.

Belongs to the TrpB family. As to quaternary structure, tetramer of two alpha and two beta chains. Pyridoxal 5'-phosphate serves as cofactor.

The catalysed reaction is (1S,2R)-1-C-(indol-3-yl)glycerol 3-phosphate + L-serine = D-glyceraldehyde 3-phosphate + L-tryptophan + H2O. The protein operates within amino-acid biosynthesis; L-tryptophan biosynthesis; L-tryptophan from chorismate: step 5/5. The beta subunit is responsible for the synthesis of L-tryptophan from indole and L-serine. The protein is Tryptophan synthase beta chain of Thermococcus onnurineus (strain NA1).